A 313-amino-acid polypeptide reads, in one-letter code: Small ribosomal subunit biogenesis GTPase RsgA (313 aa).

The 158-residue stretch at 80-237 folds into the CP-type G domain; it reads KVALRQVIVS…LIDTPGIKEF (158 aa). GTP-binding positions include 129–132 and 180–188; these read NKVD and GQSGVGKSS. Zn(2+) contacts are provided by Cys261, Cys266, His268, and Cys274.

It belongs to the TRAFAC class YlqF/YawG GTPase family. RsgA subfamily. Monomer. Associates with 30S ribosomal subunit, binds 16S rRNA. Zn(2+) serves as cofactor.

Its subcellular location is the cytoplasm. Functionally, one of several proteins that assist in the late maturation steps of the functional core of the 30S ribosomal subunit. Helps release RbfA from mature subunits. May play a role in the assembly of ribosomal proteins into the subunit. Circularly permuted GTPase that catalyzes slow GTP hydrolysis, GTPase activity is stimulated by the 30S ribosomal subunit. The sequence is that of Small ribosomal subunit biogenesis GTPase RsgA from Borrelia recurrentis (strain A1).